The chain runs to 126 residues: Precursor of CEP2 (126 aa).

Positions 1 to 19 (MKLFIITVVTILTISRVFD) are cleaved as a signal peptide. The propeptide occupies 20 to 80 (KTPATTEARK…ENNLKNRFIN (61 aa)). Hydroxyproline occurs at positions 84 and 87. Positions 96–105 (PRVLNNKFTN) are excised as a propeptide. P109, P112, and P116 each carry hydroxyproline. Positions 121–126 (PGVVNV) are excised as a propeptide.

It belongs to the C-terminally encoded plant signaling peptide (CEP) family. As to quaternary structure, interacts with CEP receptors (e.g. CEPR1 and CEPR2). Post-translationally, the mature small signaling peptide is generated by proteolytic processing of the longer precursor. As to expression, mostly expressed in roots. Present in cotyledons, shoot apical meristem (SAM), leaves, inflorescence stems and flowers.

Its subcellular location is the secreted. It localises to the extracellular space. The protein localises to the apoplast. Functionally, extracellular signaling peptide that represses primary root growth rate. Negatively regulates the number of leaves and flowering, and modulates leaf morphology. Regulates systemic nitrogen (N)-demand signaling. Mediates up-regulation of genes involved in N uptake and assimilation pathways. The sequence is that of Precursor of CEP2 from Arabidopsis thaliana (Mouse-ear cress).